The primary structure comprises 206 residues: Dephospho-CoA kinase (206 aa).

Residues 4-200 form the DPCK domain; the sequence is IVALTGGIGS…AYYLQLASQF (197 aa). 12–17 lines the ATP pocket; it reads GSGKST.

Belongs to the CoaE family.

It localises to the cytoplasm. The enzyme catalyses 3'-dephospho-CoA + ATP = ADP + CoA + H(+). Its pathway is cofactor biosynthesis; coenzyme A biosynthesis; CoA from (R)-pantothenate: step 5/5. In terms of biological role, catalyzes the phosphorylation of the 3'-hydroxyl group of dephosphocoenzyme A to form coenzyme A. This Escherichia coli O6:H1 (strain CFT073 / ATCC 700928 / UPEC) protein is Dephospho-CoA kinase.